Here is a 191-residue protein sequence, read N- to C-terminus: MKNIYLLYSIIDVSYTKALIVTNTHGSLYYASLGDKPEVLIVTMKKDFARFKNYVLQPIVGKANSEVSETLEKFRLMAEDPRLINTMHKQIPYEFIFGTELQRKVWNQLMNTNASETVCYSQMASNLGMPKSSRVVGAACGANKIALFVPCHRALTKSGQISGYRWGVPLKQRLLKLEQKPLQKESSLKEK.

DNA-binding residues include Y120 and R134. Catalysis depends on C151, which acts as the Nucleophile; methyl group acceptor.

This sequence belongs to the MGMT family.

The protein localises to the nucleus. It carries out the reaction a 6-O-methyl-2'-deoxyguanosine in DNA + L-cysteinyl-[protein] = S-methyl-L-cysteinyl-[protein] + a 2'-deoxyguanosine in DNA. The catalysed reaction is a 4-O-methyl-thymidine in DNA + L-cysteinyl-[protein] = a thymidine in DNA + S-methyl-L-cysteinyl-[protein]. Functionally, involved in the cellular defense against the biological effects of O6-methylguanine (O6-MeG) and O4-methylthymine (O4-MeT) in DNA. Repairs the methylated nucleobase in DNA by stoichiometrically transferring the methyl group to a cysteine residue in the enzyme. This is a suicide reaction: the enzyme is irreversibly inactivated. The protein is Methylated-DNA--protein-cysteine methyltransferase (MGT1) of Debaryomyces hansenii (strain ATCC 36239 / CBS 767 / BCRC 21394 / JCM 1990 / NBRC 0083 / IGC 2968) (Yeast).